We begin with the raw amino-acid sequence, 199 residues long: NADH-quinone oxidoreductase subunit C (199 aa).

It belongs to the complex I 30 kDa subunit family. In terms of assembly, NDH-1 is composed of 14 different subunits. Subunits NuoB, C, D, E, F, and G constitute the peripheral sector of the complex.

The protein resides in the cell inner membrane. It catalyses the reaction a quinone + NADH + 5 H(+)(in) = a quinol + NAD(+) + 4 H(+)(out). In terms of biological role, NDH-1 shuttles electrons from NADH, via FMN and iron-sulfur (Fe-S) centers, to quinones in the respiratory chain. The immediate electron acceptor for the enzyme in this species is believed to be ubiquinone. Couples the redox reaction to proton translocation (for every two electrons transferred, four hydrogen ions are translocated across the cytoplasmic membrane), and thus conserves the redox energy in a proton gradient. The protein is NADH-quinone oxidoreductase subunit C of Leptothrix cholodnii (strain ATCC 51168 / LMG 8142 / SP-6) (Leptothrix discophora (strain SP-6)).